Consider the following 104-residue polypeptide: MSTYAIIKTGGKQVKVEVGQAIYVEKIDAEAGAEITFNEVVLVGGDKTVVGTPVVEGATVVGTVEKQGKQKKVVTFKYKPKKGSHRKQGHRQPYTKVVINAIKA.

The protein belongs to the bacterial ribosomal protein bL21 family. As to quaternary structure, part of the 50S ribosomal subunit. Contacts protein L20.

Functionally, this protein binds to 23S rRNA in the presence of protein L20. This is Large ribosomal subunit protein bL21 from Streptococcus equi subsp. equi (strain 4047).